Reading from the N-terminus, the 296-residue chain is tRNA (guanine-N(7)-)-methyltransferase (296 aa).

The disordered stretch occupies residues 1–26 (MSKRTREESEMEAGPSTASPGVSVSP). S-adenosyl-L-methionine contacts are provided by residues Gly-101, 124–125 (EI), 168–169 (NS), and Leu-188. Asp-191 is a catalytic residue. 266–268 (TEE) is an S-adenosyl-L-methionine binding site.

Belongs to the class I-like SAM-binding methyltransferase superfamily. TrmB family. Forms a complex with TRM82.

Its subcellular location is the nucleus. It catalyses the reaction guanosine(46) in tRNA + S-adenosyl-L-methionine = N(7)-methylguanosine(46) in tRNA + S-adenosyl-L-homocysteine. It participates in tRNA modification; N(7)-methylguanine-tRNA biosynthesis. Functionally, catalyzes the formation of N(7)-methylguanine at position 46 (m7G46) in tRNA. The chain is tRNA (guanine-N(7)-)-methyltransferase from Cryptococcus neoformans var. neoformans serotype D (strain JEC21 / ATCC MYA-565) (Filobasidiella neoformans).